We begin with the raw amino-acid sequence, 469 residues long: Putative dipeptidase MW1694 (469 aa).

His84 provides a ligand contact to Zn(2+). Residue Asp86 is part of the active site. Zn(2+) is bound at residue Asp115. Glu149 (proton acceptor) is an active-site residue. Zn(2+)-binding residues include Glu150, Asp173, and His440.

The protein belongs to the peptidase M20A family. Requires Zn(2+) as cofactor.

The protein is Putative dipeptidase MW1694 of Staphylococcus aureus (strain MW2).